The chain runs to 214 residues: Probable transaldolase (214 aa).

Catalysis depends on Lys83, which acts as the Schiff-base intermediate with substrate.

This sequence belongs to the transaldolase family. Type 3B subfamily.

It localises to the cytoplasm. It catalyses the reaction D-sedoheptulose 7-phosphate + D-glyceraldehyde 3-phosphate = D-erythrose 4-phosphate + beta-D-fructose 6-phosphate. It functions in the pathway carbohydrate degradation; pentose phosphate pathway; D-glyceraldehyde 3-phosphate and beta-D-fructose 6-phosphate from D-ribose 5-phosphate and D-xylulose 5-phosphate (non-oxidative stage): step 2/3. In terms of biological role, transaldolase is important for the balance of metabolites in the pentose-phosphate pathway. The protein is Probable transaldolase of Carboxydothermus hydrogenoformans (strain ATCC BAA-161 / DSM 6008 / Z-2901).